The sequence spans 103 residues: Small ribosomal subunit protein uS10 (103 aa).

The protein belongs to the universal ribosomal protein uS10 family. Part of the 30S ribosomal subunit.

Functionally, involved in the binding of tRNA to the ribosomes. In Xanthomonas campestris pv. campestris (strain B100), this protein is Small ribosomal subunit protein uS10.